The following is a 353-amino-acid chain: UPF0283 membrane protein YcjF (353 aa).

A run of 3 helical transmembrane segments spans residues 70–90, 100–120, and 213–233; these read MVMG…VQWT, VALG…GSVV, and ESTL…FIAW.

This sequence belongs to the UPF0283 family.

It is found in the cell inner membrane. The chain is UPF0283 membrane protein YcjF from Escherichia coli O127:H6 (strain E2348/69 / EPEC).